A 129-amino-acid chain; its full sequence is Virion-associated protein (129 aa).

Coiled-coil stretches lie at residues 1-31 (MANLNQIQKEVSEILSDQKSMKSDIKAILEL) and 38-59 (TKESLEAVAAKIVNDLTKLIND). The capsid binding stretch occupies residues 122 to 129 (PAGWPNQF).

The protein belongs to the caulimovirus ORF III family. As to quaternary structure, homotetramer, through coiled-coil domain. Homotrimer when interacts with icosehadral capsid. Interacts with capsid protein, and with Movement protein.

Its subcellular location is the virion. It localises to the host cell junction. The protein resides in the host plasmodesma. Functionally, plays a role in virus cell-to-cell and plant-to-plant transmission. Interacts with virion icosahedral capsid and movement protein, thereby facilitating virion cell-to-cell transmission through plasmodesmata opened by viral movement protein. Also interacts with aphid transmission factor, attaching the virion to aphid stylet when the animal feeds on an virus infected plant. Aphid saliva may later detach the virion, inducing release of infectious particles when the animal feeds on a new plant. The chain is Virion-associated protein from Arabidopsis thaliana (Mouse-ear cress).